The primary structure comprises 309 residues: D-alanine--D-alanine ligase (309 aa).

Residues 109-304 (KMVWAACGLP…FTALCLAILE (196 aa)) enclose the ATP-grasp domain. Position 135–190 (135–190 (VAELGLPIFVKPVHEGSSMGATKVTAASQLKAAWERAARFDDLVLAEEFIVGAELT)) interacts with ATP. 3 residues coordinate Mg(2+): aspartate 258, glutamate 271, and asparagine 273.

This sequence belongs to the D-alanine--D-alanine ligase family. The cofactor is Mg(2+). Requires Mn(2+) as cofactor.

It localises to the cytoplasm. The catalysed reaction is 2 D-alanine + ATP = D-alanyl-D-alanine + ADP + phosphate + H(+). It functions in the pathway cell wall biogenesis; peptidoglycan biosynthesis. Cell wall formation. The protein is D-alanine--D-alanine ligase of Aromatoleum aromaticum (strain DSM 19018 / LMG 30748 / EbN1) (Azoarcus sp. (strain EbN1)).